We begin with the raw amino-acid sequence, 939 residues long: Isoleucine--tRNA ligase (939 aa).

The 'HIGH' region signature appears at 59-69 (PYANGDIHIGH). Residue glutamate 570 participates in L-isoleucyl-5'-AMP binding. The 'KMSKS' region signature appears at 611 to 615 (KMSKS). An ATP-binding site is contributed by lysine 614. 4 residues coordinate Zn(2+): cysteine 902, cysteine 905, cysteine 922, and cysteine 925.

It belongs to the class-I aminoacyl-tRNA synthetase family. IleS type 1 subfamily. In terms of assembly, monomer. Requires Zn(2+) as cofactor.

Its subcellular location is the cytoplasm. The enzyme catalyses tRNA(Ile) + L-isoleucine + ATP = L-isoleucyl-tRNA(Ile) + AMP + diphosphate. Its function is as follows. Catalyzes the attachment of isoleucine to tRNA(Ile). As IleRS can inadvertently accommodate and process structurally similar amino acids such as valine, to avoid such errors it has two additional distinct tRNA(Ile)-dependent editing activities. One activity is designated as 'pretransfer' editing and involves the hydrolysis of activated Val-AMP. The other activity is designated 'posttransfer' editing and involves deacylation of mischarged Val-tRNA(Ile). The polypeptide is Isoleucine--tRNA ligase (Nitrosomonas europaea (strain ATCC 19718 / CIP 103999 / KCTC 2705 / NBRC 14298)).